A 31-amino-acid chain; its full sequence is Cliotide T13 (31 aa).

The segment at residues 1–31 (DTTPCGESCVWIPCVSSIVGCSCQNKVCYQN) is a cross-link (cyclopeptide (Asp-Asn)). 3 disulfides stabilise this stretch: Cys5/Cys21, Cys9/Cys23, and Cys14/Cys28.

Post-translationally, contains 3 disulfide bonds. This is a cyclic peptide. As to expression, expressed in seed but not in root nodules.

Probably participates in a plant defense mechanism. Not active against Gram-negative bacterium E.coli ATCC 700926 or Gram-positive bacterium S.aureus ATCC 12600 up to a concentration of 100 uM under low-salt conditions. The chain is Cliotide T13 from Clitoria ternatea (Butterfly pea).